Consider the following 426-residue polypeptide: Serine/threonine-protein kinase ssn3 (426 aa).

In terms of domain architecture, Protein kinase spans 39 to 368 (YHIVGFISSG…AKEALEHPYF (330 aa)). ATP-binding positions include 45 to 53 (ISSGTYGRV) and Lys69. The active-site Proton acceptor is Asp171. The segment covering 389–398 (RRITHDDNDI) has biased composition (basic and acidic residues). A disordered region spans residues 389–426 (RRITHDDNDIRSGSLPGTKRSGLPDDSLMSRAAKRMKE).

This sequence belongs to the protein kinase superfamily. CMGC Ser/Thr protein kinase family. CDC2/CDKX subfamily. In terms of assembly, component of the srb8-11 complex, a regulatory module of the Mediator complex. Requires Mg(2+) as cofactor.

Its subcellular location is the nucleus. It catalyses the reaction L-seryl-[protein] + ATP = O-phospho-L-seryl-[protein] + ADP + H(+). It carries out the reaction L-threonyl-[protein] + ATP = O-phospho-L-threonyl-[protein] + ADP + H(+). The catalysed reaction is [DNA-directed RNA polymerase] + ATP = phospho-[DNA-directed RNA polymerase] + ADP + H(+). Functionally, component of the srb8-11 complex. The srb8-11 complex is a regulatory module of the Mediator complex which is itself involved in regulation of basal and activated RNA polymerase II-dependent transcription. The srb8-11 complex may be involved in the transcriptional repression of a subset of genes regulated by Mediator. It may inhibit the association of the Mediator complex with RNA polymerase II to form the holoenzyme complex. The srb8-11 complex phosphorylates the C-terminal domain (CTD) of the largest subunit of RNA polymerase II. This is Serine/threonine-protein kinase ssn3 (ssn3) from Emericella nidulans (strain FGSC A4 / ATCC 38163 / CBS 112.46 / NRRL 194 / M139) (Aspergillus nidulans).